Reading from the N-terminus, the 862-residue chain is Putative cargo-transport protein ypp1 (862 aa).

TPR repeat units lie at residues 342 to 377 (QQIF…KSHE), 460 to 493 (SFMY…QPTN), and 494 to 527 (TNAL…NPKY). A phosphoserine mark is found at S632, S633, and S637. TPR repeat units follow at residues 665–698 (ILGF…RRGK), 705–738 (QKLW…DHEC), 740–772 (WVYY…DPED), and 814–847 (PEAW…ADTN).

It belongs to the YPP1 family.

It is found in the cytoplasm. Its function is as follows. Involved in endocytosis. This chain is Putative cargo-transport protein ypp1 (ypp1), found in Schizosaccharomyces pombe (strain 972 / ATCC 24843) (Fission yeast).